The primary structure comprises 416 residues: Caspase-9 (416 aa).

The CARD domain occupies 1–92 (MDEADRRLLR…DMLASFLRTN (92 aa)). At T125 the chain carries Phosphothreonine; by MAPK1. At Y153 the chain carries Phosphotyrosine; by ABL1. Catalysis depends on residues H237 and C287. The disordered stretch occupies residues 294-320 (HGFEVASTSPEDESPGSNPEPDATPFQ). Phosphoserine is present on residues S302, S307, and S310. The propeptide occupies 316–330 (ATPFQEGLRTFDQLD). R355 is subject to (Microbial infection) ADP-riboxanated arginine.

It belongs to the peptidase C14A family. As to quaternary structure, heterotetramer that consists of two anti-parallel arranged heterodimers, each one formed by a 35 kDa (p35) and a 10 kDa (p10) subunit. Caspase-9 and APAF1 bind to each other via their respective NH2-terminal CED-3 homologous domains in the presence of cytochrome C and ATP. Interacts (inactive form) with EFHD2. Interacts with HAX1. Interacts with BIRC2/c-IAP1, XIAP/BIRC4, BIRC5/survivin, BIRC6/bruce and BIRC7/livin. Interacts with ABL1 (via SH3 domain); the interaction is direct and increases in the response of cells to genotoxic stress and ABL1/c-Abl activation. Interacts with BCL2L10. Interacts with NleF from pathogenic E.coli. Cleavages at Asp-315 by granzyme B and at Asp-330 by caspase-3 generate the two active subunits. Caspase-8 and -10 can also be involved in these processing events. Post-translationally, phosphorylated at Thr-125 by MAPK1/ERK2. Phosphorylation at Thr-125 is sufficient to block caspase-9 processing and subsequent caspase-3 activation. Phosphorylation on Tyr-153 by ABL1/c-Abl; occurs in the response of cells to DNA damage. In terms of processing, (Microbial infection) ADP-riboxanation by C.violaceum CopC blocks CASP9 processing, preventing CASP9 activation and ability to mediate intrinsic apoptosis. Ubiquitinated by BIRC6; this activity is inhibited by DIABLO/SMAC. In terms of tissue distribution, ubiquitous, with highest expression in the heart, moderate expression in liver, skeletal muscle, and pancreas. Low levels in all other tissues. Within the heart, specifically expressed in myocytes.

It catalyses the reaction Strict requirement for an Asp residue at position P1 and with a marked preference for His at position P2. It has a preferred cleavage sequence of Leu-Gly-His-Asp-|-Xaa.. With respect to regulation, inhibited by the effector protein NleF that is produced by pathogenic E.coli; this inhibits apoptosis. Inhibited by BIRC6; following inhibition of BIRC6-caspase binding by DIABLO/SMAC, BIRC6 is subjected to caspase cleavage, leading to an increase in active caspases. Involved in the activation cascade of caspases responsible for apoptosis execution. Binding of caspase-9 to Apaf-1 leads to activation of the protease which then cleaves and activates effector caspases caspase-3 (CASP3) or caspase-7 (CASP7). Promotes DNA damage-induced apoptosis in a ABL1/c-Abl-dependent manner. Proteolytically cleaves poly(ADP-ribose) polymerase (PARP). Cleaves BIRC6 following inhibition of BIRC6-caspase binding by DIABLO/SMAC. In terms of biological role, lacks activity is an dominant-negative inhibitor of caspase-9. This Homo sapiens (Human) protein is Caspase-9 (CASP9).